Reading from the N-terminus, the 346-residue chain is MNPRATPVLVLSLALGTTITISSNHWVLAWTGLEINTLAIIPLISKSHHPRAVEAATKYFLTQAAASALVLFSSMTNAWATGQWDITQLNHPTSCLLLTAAIAIKLGLVPFHFWFPEVLQGSPLMTALLLSTLMKFPPLTLLLMTSKSLNPALLTAMALASTALGGWMGLNQTQTRKILAFSSISHLGWIAIILVYSPKLALLTFYLYTIMTSAVFMALNKIKALNLSMILISWTKTPVLNTTLMLVLLSLAGLPPLTGFMPKWLIIQELTKQEMTPAAMAIAMLSLLSLFFYLRLAYHSTITLPPNSSNHMKQWYTSKPPSTPTAILASLSILLLPLSPMVHAIV.

Transmembrane regions (helical) follow at residues 25–45 (HWVL…PLIS), 60–80 (FLTQ…NAWA), 95–115 (CLLL…HFWF), 124–144 (LMTA…LLLM), 149–169 (LNPA…GWMG), 178–195 (ILAF…IILV), 200–219 (LALL…FMAL), 247–267 (VLLS…WLII), 274–294 (EMTP…FFYL), and 326–346 (AILA…HAIV).

It belongs to the complex I subunit 2 family.

It localises to the mitochondrion inner membrane. It carries out the reaction a ubiquinone + NADH + 5 H(+)(in) = a ubiquinol + NAD(+) + 4 H(+)(out). Its function is as follows. Core subunit of the mitochondrial membrane respiratory chain NADH dehydrogenase (Complex I) that is believed to belong to the minimal assembly required for catalysis. Complex I functions in the transfer of electrons from NADH to the respiratory chain. The immediate electron acceptor for the enzyme is believed to be ubiquinone. In Anas capensis (Cape teal), this protein is NADH-ubiquinone oxidoreductase chain 2 (MT-ND2).